Consider the following 62-residue polypeptide: 2-hydroxymuconate tautomerase (62 aa).

Proline 2 serves as the catalytic Proton acceptor; via imino nitrogen. 9–12 (LEGR) serves as a coordination point for substrate.

It belongs to the 4-oxalocrotonate tautomerase family. In terms of assembly, homohexamer.

It catalyses the reaction (2Z,4E)-2-hydroxyhexa-2,4-dienedioate = (3E)-2-oxohex-3-enedioate. Functionally, catalyzes both 1,3- and 1,5-keto-enol tautomerization of the diacid 2-hydroxymuconate (2-hydroxy-2,4-hexadienedioate) to produce 2-oxo-4-hexenedioate. This reaction is highly stereoselective and produces a mixture of stereoisomers, where the (3S)-isomer of 2-oxo-4-hexenedioate predominates. Also catalyzes the tautomerization of 2-hydroxymuconate to 2-oxo-3-hexenedioate, however this reaction is slower and occurs after the tautomerization of 2-hydroxymuconate to 2-oxo-4-hexenedioate. Using 2-hydroxy-2,4-pentadienoate, phenylenolpyruvate, (p-hydroxyphenyl)-enolpyruvate and 2-hydroxy-2,4-heptadiene-1,7-dioate, YwhB is a highly efficient 1,3-keto-enol tautomerase, but clearly not a 1,5-keto-enol tautomerase. Tautomerization of the two monoacids 2-hydroxy-2,4-pentadienoate and phenylenolpyruvate produces a mixture of stereoisomers, where the (3R)-isomers predominate. This chain is 2-hydroxymuconate tautomerase (ywhB), found in Bacillus subtilis (strain 168).